The following is a 413-amino-acid chain: Serine hydroxymethyltransferase (413 aa).

Residues Leu-117 and 121 to 123 (GHL) contribute to the (6S)-5,6,7,8-tetrahydrofolate site. Lys-226 carries the post-translational modification N6-(pyridoxal phosphate)lysine. Residues Glu-239 and 349-351 (SPF) each bind (6S)-5,6,7,8-tetrahydrofolate.

This sequence belongs to the SHMT family. As to quaternary structure, homodimer. The cofactor is pyridoxal 5'-phosphate.

The protein localises to the cytoplasm. The enzyme catalyses (6R)-5,10-methylene-5,6,7,8-tetrahydrofolate + glycine + H2O = (6S)-5,6,7,8-tetrahydrofolate + L-serine. It functions in the pathway one-carbon metabolism; tetrahydrofolate interconversion. Its pathway is amino-acid biosynthesis; glycine biosynthesis; glycine from L-serine: step 1/1. Catalyzes the reversible interconversion of serine and glycine with tetrahydrofolate (THF) serving as the one-carbon carrier. This reaction serves as the major source of one-carbon groups required for the biosynthesis of purines, thymidylate, methionine, and other important biomolecules. Also exhibits THF-independent aldolase activity toward beta-hydroxyamino acids, producing glycine and aldehydes, via a retro-aldol mechanism. The polypeptide is Serine hydroxymethyltransferase (Bacillus cereus (strain AH187)).